The primary structure comprises 82 residues: Immediate early response 3-interacting protein 1 (82 aa).

2 helical membrane passes run 2-22 (AFTLYTLLQAALLCVNAVAVL) and 62-82 (VMRVPLIIVNSVTIVLLLLFG).

It belongs to the YOS1 family.

Its subcellular location is the endoplasmic reticulum membrane. Its function is as follows. Regulator of endoplasmic reticulum secretion that acts as a key determinant of brain size. Required for secretion of extracellular matrix proteins. Required for correct brain development by depositing sufficient extracellular matrix proteins for tissue integrity and the proliferation of neural progenitors. Acts as a regulator of the unfolded protein response (UPR). The chain is Immediate early response 3-interacting protein 1 from Xenopus laevis (African clawed frog).